The primary structure comprises 154 residues: Ascorbate-specific PTS system EIIA component (154 aa).

One can recognise a PTS EIIA type-2 domain in the interval 6 to 150 (SLAENKSIRL…QEVLDLIDRT (145 aa)). The active-site Tele-phosphohistidine intermediate is the histidine 68. Histidine 68 bears the Phosphohistidine mark.

The protein localises to the cytoplasm. Its function is as follows. The phosphoenolpyruvate-dependent sugar phosphotransferase system (sugar PTS), a major carbohydrate active transport system, catalyzes the phosphorylation of incoming sugar substrates concomitantly with their translocation across the cell membrane. The enzyme II UlaABC PTS system is involved in ascorbate transport. The polypeptide is Ascorbate-specific PTS system EIIA component (ulaC) (Shigella flexneri).